Consider the following 296-residue polypeptide: Nucleotide-binding protein stu0831 (296 aa).

Residue 13 to 20 coordinates ATP; sequence GMSGAGKT. 63–66 serves as a coordination point for GTP; it reads DMRS.

It belongs to the RapZ-like family.

Functionally, displays ATPase and GTPase activities. The protein is Nucleotide-binding protein stu0831 of Streptococcus thermophilus (strain ATCC BAA-250 / LMG 18311).